The sequence spans 594 residues: Transcriptional repressor p66-beta (594 aa).

Position 17 is a phosphoserine (Ser-17). Glycyl lysine isopeptide (Lys-Gly) (interchain with G-Cter in SUMO2) cross-links involve residues Lys-33 and Lys-66. The tract at residues 62-143 (ELPTKQDGSG…ASSPRSSSRM (82 aa)) is disordered. Basic and acidic residues predominate over residues 74–89 (GYEEKLNGNLRPHGDN). Residue Lys-98 forms a Glycyl lysine isopeptide (Lys-Gly) (interchain with G-Cter in SUMO2) linkage. Basic and acidic residues predominate over residues 109 to 119 (SARRSEPDRGR). Thr-121 carries the post-translational modification Phosphothreonine. Phosphoserine occurs at positions 123, 130, 135, and 136. Positions 130-140 (SDNEASSPRSS) are enriched in low complexity. The stretch at 141–195 (SRMEERLKAANLEMFKGKGMEERQQLIKQLRDELRLEEARLVLLKKLRQSQLQKE) forms a coiled coil. A Glycyl lysine isopeptide (Lys-Gly) (interchain with G-Cter in SUMO2) cross-link involves residue Lys-148. Residues 166–191 (LIKQLRDELRLEEARLVLLKKLRQSQ) form a CR1; interaction with MBD2 and MBD3 region. Residue Lys-200 forms a Glycyl lysine isopeptide (Lys-Gly) (interchain with G-Cter in SUMO2) linkage. Ser-209 carries the post-translational modification Phosphoserine. A disordered region spans residues 214-237 (SPAHVGQQGLSKLPSRPGAQGIEP). A Glycyl lysine isopeptide (Lys-Gly) (interchain with G-Cter in SUMO2) cross-link involves residue Lys-282. 3 positions are modified to phosphoserine: Ser-334, Ser-339, and Ser-341. Residues 341–481 (SAMSDAANSQ…QEQEIEQRLQ (141 aa)) are CR2; histone tail-binding. Residues Lys-354, Lys-455, and Lys-468 each participate in a glycyl lysine isopeptide (Lys-Gly) (interchain with G-Cter in SUMO2) cross-link. Residues 415 to 468 (RVEPFVCAQCRTDFTPHWKQEKNGKILCEQCMTSNQKKALKAEHTNRLKNAFVK) form a GATA-type zinc finger. A coiled-coil region spans residues 450–483 (QKKALKAEHTNRLKNAFVKALQQEQEIEQRLQQQ). At Ser-487 the chain carries Phosphoserine. Lys-499 is covalently cross-linked (Glycyl lysine isopeptide (Lys-Gly) (interchain with G-Cter in SUMO2)).

As to quaternary structure, homooligomer. Component of the nucleosome remodeling and deacetylase (NuRD) repressor complex, composed of core proteins MTA1, MTA2, MTA3, RBBP4, RBBP7, HDAC1, HDAC2, MBD2, MBD3, and peripherally associated proteins CDK2AP1, CDK2AP2, GATAD2A, GATAD2B, CHD3, CHD4 and CHD5. The exact stoichiometry of the NuRD complex is unknown, and some subunits such as MBD2 and MBD3, GATAD2A and GATAD2B, and CHD3, CHD4 and CHD5 define mutually exclusive NuRD complexes. Interacts with MBD2; this is required for the enhancement of MBD2-mediated repression and for targeting to the chromatin. Interacts with MBD3. Component of the MeCP1 histone deacetylase complex. Interacts with histone tails, including that of histones H2A, H2B, H3 and H4. Interacts with ERCC6.

It is found in the nucleus speckle. It localises to the nucleus. The protein resides in the chromosome. Its function is as follows. Transcriptional repressor. Acts as a component of the histone deacetylase NuRD complex which participates in the remodeling of chromatin. Enhances MBD2-mediated repression. Efficient repression requires the presence of GATAD2A. Targets MBD3 to discrete loci in the nucleus. May play a role in synapse development. The chain is Transcriptional repressor p66-beta (Gatad2b) from Mus musculus (Mouse).